Reading from the N-terminus, the 375-residue chain is Acyl-coenzyme A diphosphatase NUDT19 (375 aa).

A Nudix hydrolase domain is found at 15 to 263 (AASIVLAAGW…IWLPPPQFYE (249 aa)). Residues 91-116 (LGPAPFSRTAFPSLPDTDDHKTDNTG) are disordered. Residues 116-137 (GTLPEDVAFRICAVREAFEEAG) carry the Nudix box motif. Positions 131 and 135 each coordinate Mg(2+). The short motif at 373–375 (SHL) is the Microbody targeting signal element.

This sequence belongs to the Nudix hydrolase family. In terms of assembly, monomer. Requires Mg(2+) as cofactor. The cofactor is Mn(2+).

The protein localises to the peroxisome. The catalysed reaction is an acyl-CoA + H2O = an acyl-4'-phosphopantetheine + adenosine 3',5'-bisphosphate + 2 H(+). It carries out the reaction CoA + H2O = (R)-4'-phosphopantetheine + adenosine 3',5'-bisphosphate + 2 H(+). It catalyses the reaction hexanoyl-CoA + H2O = hexanoyl-4'-phosphopantetheine + adenosine 3',5'-bisphosphate + 2 H(+). The enzyme catalyses octanoyl-CoA + H2O = S-octanoyl-4'-phosphopantetheine + adenosine 3',5'-bisphosphate + 2 H(+). The catalysed reaction is butanoyl-CoA + H2O = S-butanoyl-4'-phosphopantetheine + adenosine 3',5'-bisphosphate + 2 H(+). It carries out the reaction propanoyl-CoA + H2O = propanoyl-4'-phosphopantetheine + adenosine 3',5'-bisphosphate + 2 H(+). It catalyses the reaction malonyl-CoA + H2O = malonyl-4'-phosphopantetheine + adenosine 3',5'-bisphosphate + 2 H(+). The enzyme catalyses succinyl-CoA + H2O = succinyl-4'-phosphopantetheine + adenosine 3',5'-bisphosphate + 2 H(+). The catalysed reaction is choloyl-CoA + H2O = S-choloyl-4'-phosphopantetheine + adenosine 3',5'-bisphosphate + 2 H(+). It carries out the reaction 4,8-dimethylnonanoyl-CoA + H2O = S-(4,8-dimethylnonanoyl)-4'-phosphopantetheine + adenosine 3',5'-bisphosphate + 2 H(+). It catalyses the reaction (9Z,12Z,15Z)-octadecatrienoyl-CoA + H2O = S-(9Z,12Z,15Z-octadecatrienoyl)-4'-phosphopantetheine + adenosine 3',5'-bisphosphate + 2 H(+). The enzyme catalyses (9Z,12Z)-octadecadienoyl-CoA + H2O = S-(9Z,12Z-octadecadienoyl)-4'-phosphopantetheine + adenosine 3',5'-bisphosphate + 2 H(+). The catalysed reaction is (9Z)-hexadecenoyl-CoA + H2O = S-(9Z-hexadecenoyl)-4'-phosphopantetheine + adenosine 3',5'-bisphosphate + 2 H(+). It carries out the reaction (9Z)-tetradecenoyl-CoA + H2O = S-(9Z-tetradecenoyl)-4'-phosphopantetheine + adenosine 3',5'-bisphosphate + 2 H(+). It catalyses the reaction (6Z)-octenoyl-CoA + H2O = S-(6Z-octenoyl)-4'-phosphopantetheine + adenosine 3',5'-bisphosphate + 2 H(+). The enzyme catalyses hexadecanoyl-CoA + H2O = S-hexadecanoyl-4'-phosphopantetheine + adenosine 3',5'-bisphosphate + 2 H(+). The catalysed reaction is tetradecanoyl-CoA + H2O = tetradecanoyl-4'-phosphopantetheine + adenosine 3',5'-bisphosphate + 2 H(+). It carries out the reaction dodecanoyl-CoA + H2O = S-dodecanoyl-4'-phosphopantetheine + adenosine 3',5'-bisphosphate + 2 H(+). It catalyses the reaction a 5'-end CoA-ribonucleoside in mRNA + H2O = a 5'-end phospho-adenosine-phospho-ribonucleoside in mRNA + (R)-4'-phosphopantetheine + 2 H(+). In terms of biological role, fatty acyl-coenzyme A (CoA) diphosphatase that hydrolyzes fatty acyl-CoA to yield acyl-4'-phosphopantetheine and adenosine 3',5'-bisphosphate. Mediates the hydrolysis of a wide range of CoA esters, including choloyl-CoA and branched-chain fatty-acyl-CoA esters and at low substrate concentrations medium and long-chain fatty-acyl-CoA esters are the primary substrates. Highest activity seen with medium-chain acyl-CoA esters and higher rates of activity seen with the unsaturated acyl-CoA esters compared with the saturated esters. Exhibits decapping activity towards dpCoA-capped RNAs in vitro. The chain is Acyl-coenzyme A diphosphatase NUDT19 (NUDT19) from Homo sapiens (Human).